We begin with the raw amino-acid sequence, 196 residues long: Putative lipopolysaccharide biosynthesis O-acetyl transferase WbbJ (196 aa).

This sequence belongs to the transferase hexapeptide repeat family.

Its pathway is bacterial outer membrane biogenesis; lipopolysaccharide biosynthesis. Putative O-acetyltransferase that transfers an O-acetyl group to the O antigen. This Escherichia coli (strain K12) protein is Putative lipopolysaccharide biosynthesis O-acetyl transferase WbbJ (wbbJ).